Reading from the N-terminus, the 185-residue chain is Ribosome-recycling factor (185 aa).

This sequence belongs to the RRF family.

Its subcellular location is the cytoplasm. Responsible for the release of ribosomes from messenger RNA at the termination of protein biosynthesis. May increase the efficiency of translation by recycling ribosomes from one round of translation to another. The polypeptide is Ribosome-recycling factor (Nitrosomonas eutropha (strain DSM 101675 / C91 / Nm57)).